The primary structure comprises 327 residues: Movement protein (327 aa).

Residues 297 to 327 (SASSSNTENELARVSQNIDLLKNKLKEICGE) adopt a coiled-coil conformation.

This sequence belongs to the caulimoviridae movement protein family. Homotrimer, through the coiled-coil domain. Interacts with VAP. May interact (via N-terminus) with host prenylated Rab acceptor protein 1D (PRA1D).

It is found in the host cell junction. It localises to the host plasmodesma. Functionally, transports viral genome to neighboring plant cells directly through plasmosdesmata, without any budding. The movement protein allows efficient cell to cell propagation, by bypassing the host cell wall barrier. Acts by forming tubules structures that increase the size exclusion limit (SEL) of plasmodesmata, thereby allowing viral ribonucleocapsids to spread directly to neighboring cells. This is Movement protein from Cauliflower mosaic virus (strain CM-1841) (CaMV).